The primary structure comprises 180 residues: Inorganic pyrophosphatase (180 aa).

Lys28, Arg42, and Tyr54 together coordinate substrate. Mg(2+)-binding residues include Asp66, Asp71, and Asp102. Residue Tyr139 participates in substrate binding.

Belongs to the PPase family. As to quaternary structure, homohexamer. It depends on Mg(2+) as a cofactor.

The protein localises to the cytoplasm. The enzyme catalyses diphosphate + H2O = 2 phosphate + H(+). Its function is as follows. Hydrolyzes PPi generated in anabolic reactions. Catalyzes the hydrolysis of inorganic pyrophosphate (PPi) forming two phosphate ions. This Pseudanabaena sp. (strain PCC 6903) protein is Inorganic pyrophosphatase.